Here is a 226-residue protein sequence, read N- to C-terminus: V-type proton ATPase subunit E (226 aa).

This sequence belongs to the V-ATPase E subunit family. As to quaternary structure, V-ATPase is a heteromultimeric enzyme made up of two complexes: the ATP-hydrolytic V1 complex and the proton translocation V0 complex. The V1 complex consists of three catalytic AB heterodimers that form a heterohexamer, three peripheral stalks each consisting of EG heterodimers, one central rotor including subunits D and F, and the regulatory subunits C and H. The proton translocation complex V0 consists of the proton transport subunit a, a ring of proteolipid subunits c9c'', rotary subunit d, subunits e and f, and the accessory subunits VhaAC45 and ATP6AP2.

Subunit of the V1 complex of vacuolar(H+)-ATPase (V-ATPase), a multisubunit enzyme composed of a peripheral complex (V1) that hydrolyzes ATP and a membrane integral complex (V0) that translocates protons. V-ATPase is responsible for acidifying and maintaining the pH of intracellular compartments and in some cell types, is targeted to the plasma membrane, where it is responsible for acidifying the extracellular environment. The polypeptide is V-type proton ATPase subunit E (VHA26) (Manduca sexta (Tobacco hawkmoth)).